The chain runs to 266 residues: U2 small nuclear ribonucleoprotein A' (266 aa).

LRR repeat units follow at residues Ile-30–Ala-51, Pro-53–Asp-74, Asp-75–Pro-95, and Lys-97–Ser-118. The region spanning Asn-132–Asp-170 is the LRRCT domain.

Belongs to the U2 small nuclear ribonucleoprotein A family. In terms of assembly, associated with the spliceosome.

It localises to the nucleus. Involved in pre-mRNA splicing. This is U2 small nuclear ribonucleoprotein A' (LEA1) from Candida glabrata (strain ATCC 2001 / BCRC 20586 / JCM 3761 / NBRC 0622 / NRRL Y-65 / CBS 138) (Yeast).